Reading from the N-terminus, the 394-residue chain is MKLGVVGLGQAGGKIVDALLEYDQRTNCHIVHDALTVNTATADLNALEHIPADARVLIGKSQVGGQGVGGDNELGATITTEDITEIQHVIDTISVHEIDAFLLVAALGGGTGSGALPVVGRHLKQLYTEPVYGLGILPSTNEGGLYSLNAARSLQTAVRELDNLLIFDNDAHRQANESLTGGYAAINRELATRLGVLFGAGDIDTGTANPESVVDASEIINTLKGGGVSTLGYASQSLEEEDGAEAAGLLSRFKRESSTDSAGGTNRITSLVRRATLGRLTLPVEPANVSIDRGLVIVAGPSDCLNRKGIERGRTWVEEQTGCLSIRGGDYPLPESNTVAVVVLFSGISGADRLHELRSIGSEAQTTGAERTGSSDRHLESILGDDADELDSLF.

GTP is bound by residues 10–14 (QAGGK), 110–112 (GTG), glutamate 142, asparagine 169, and asparagine 187.

It belongs to the CetZ family.

It is found in the cytoplasm. Functionally, involved in cell shape control. The chain is Tubulin-like protein CetZ4 from Haloferax volcanii (strain ATCC 29605 / DSM 3757 / JCM 8879 / NBRC 14742 / NCIMB 2012 / VKM B-1768 / DS2) (Halobacterium volcanii).